A 553-amino-acid chain; its full sequence is Protein YloV (553 aa).

The 193-residue stretch at 9 to 201 folds into the DhaL domain; the sequence is RTFAEMILAG…LLCVYEGFLA (193 aa).

This is Protein YloV (yloV) from Bacillus subtilis (strain 168).